A 553-amino-acid polypeptide reads, in one-letter code: Chaperonin GroEL (553 aa).

ATP is bound by residues 30-33, lysine 51, 87-91, glycine 416, and aspartate 496; these read TLGP and DGTTT.

Belongs to the chaperonin (HSP60) family. As to quaternary structure, forms a cylinder of 14 subunits composed of two heptameric rings stacked back-to-back. Interacts with the co-chaperonin GroES.

It is found in the cytoplasm. It catalyses the reaction ATP + H2O + a folded polypeptide = ADP + phosphate + an unfolded polypeptide.. Functionally, together with its co-chaperonin GroES, plays an essential role in assisting protein folding. The GroEL-GroES system forms a nano-cage that allows encapsulation of the non-native substrate proteins and provides a physical environment optimized to promote and accelerate protein folding. This chain is Chaperonin GroEL, found in Alkalilimnicola ehrlichii (strain ATCC BAA-1101 / DSM 17681 / MLHE-1).